A 160-amino-acid polypeptide reads, in one-letter code: Putative antiporter subunit mnhE2 (160 aa).

Helical transmembrane passes span 23-43 (FKFT…YILH), 55-75 (IWVA…SSIS), and 100-120 (SNWA…STVI).

It belongs to the CPA3 antiporters (TC 2.A.63) subunit E family. As to quaternary structure, may form a heterooligomeric complex that consists of seven subunits: mnhA2, mnhB2, mnhC2, mnhD2, mnhE2, mnhF2 and mnhG2.

The protein resides in the cell membrane. The protein is Putative antiporter subunit mnhE2 (mnhE2) of Staphylococcus epidermidis (strain ATCC 35984 / DSM 28319 / BCRC 17069 / CCUG 31568 / BM 3577 / RP62A).